The primary structure comprises 399 residues: Pyridinium-3,5-bisthiocarboxylic acid mononucleotide nickel insertion protein (399 aa).

It belongs to the LarC family.

The enzyme catalyses Ni(II)-pyridinium-3,5-bisthiocarboxylate mononucleotide = pyridinium-3,5-bisthiocarboxylate mononucleotide + Ni(2+). Its function is as follows. Involved in the biosynthesis of a nickel-pincer cofactor ((SCS)Ni(II) pincer complex). Binds Ni(2+), and functions in nickel delivery to pyridinium-3,5-bisthiocarboxylic acid mononucleotide (P2TMN), to form the mature cofactor. Is thus probably required for the activation of nickel-pincer cofactor-dependent enzymes. The protein is Pyridinium-3,5-bisthiocarboxylic acid mononucleotide nickel insertion protein of Clostridium kluyveri (strain ATCC 8527 / DSM 555 / NBRC 12016 / NCIMB 10680 / K1).